A 277-amino-acid chain; its full sequence is Small ribosomal subunit protein uS2 (277 aa).

Residues 228-241 (YEERLQAETDKDAE) show a composition bias toward basic and acidic residues. Residues 228 to 277 (YEERLQAETDKDAESSTVQQEENPEADIPESIETKESVSAAADSDLDENE) are disordered.

It belongs to the universal ribosomal protein uS2 family.

The polypeptide is Small ribosomal subunit protein uS2 (Syntrophus aciditrophicus (strain SB)).